The chain runs to 334 residues: 3-keto-steroid reductase/17-beta-hydroxysteroid dehydrogenase 7 (334 aa).

Topologically, residues 1–229 (MRKVVLITGA…VTCPGVVMTN (229 aa)) are extracellular. Residue 8–15 (TGASSGIG) participates in NAD(+) binding. Residue asparagine 37 is glycosylated (N-linked (GlcNAc...) asparagine). Serine 171 contacts substrate. A glycan (N-linked (GlcNAc...) asparagine) is linked at asparagine 178. Tyrosine 193 serves as the catalytic Proton acceptor. N-linked (GlcNAc...) asparagine glycosylation is present at asparagine 229. The chain crosses the membrane as a helical span at residues 230–250 (LTYGILPPFVWTLLLPVIWLL). Residues 251 to 334 (RFFAHAFTVT…ITIQKSDHHS (84 aa)) lie on the Cytoplasmic side of the membrane.

Belongs to the short-chain dehydrogenases/reductases (SDR) family. ERG27 subfamily. In terms of assembly, binds to the short form of prolactin receptor. Phosphorylated. As to expression, most abundant in ovaries of pregnant animals.

It is found in the endoplasmic reticulum membrane. It catalyses the reaction 17beta-estradiol + NADP(+) = estrone + NADPH + H(+). The catalysed reaction is a 3beta-hydroxysteroid + NADP(+) = a 3-oxosteroid + NADPH + H(+). It carries out the reaction 4alpha-methyl-5alpha-cholest-7-en-3beta-ol + NADP(+) = 4alpha-methyl-5alpha-cholest-7-en-3-one + NADPH + H(+). The enzyme catalyses 4alpha-methyl-5alpha-cholest-8-en-3-one + NADPH + H(+) = 4alpha-methyl-5alpha-cholest-8-en-3beta-ol + NADP(+). It catalyses the reaction 3-dehydro-4alpha-methylzymosterol + NADPH + H(+) = 4alpha-methylzymosterol + NADP(+). The catalysed reaction is zymosterone + NADPH + H(+) = zymosterol + NADP(+). It carries out the reaction 5alpha-cholest-8-en-3-one + NADPH + H(+) = 5alpha-cholest-8-en-3beta-ol + NADP(+). The enzyme catalyses 5alpha-androstane-3beta,17beta-diol + NADP(+) = 17beta-hydroxy-5alpha-androstan-3-one + NADPH + H(+). It catalyses the reaction 5alpha-androstane-3alpha,17beta-diol + NADP(+) = 17beta-hydroxy-5alpha-androstan-3-one + NADPH + H(+). The protein operates within steroid biosynthesis; estrogen biosynthesis. It functions in the pathway steroid biosynthesis; zymosterol biosynthesis; zymosterol from lanosterol: step 5/6. Bifunctional enzyme involved in steroid-hormone metabolism and cholesterol biosynthesis. Catalyzes the NADP(H)-dependent reduction of estrogens and androgens and regulates the biological potency of these steroids. Converts estrone (E1) to a more potent estrogen, 17beta-estradiol (E2). Converts dihydrotestosterone (DHT) to an inactive form. Also participates in the post-squalene cholesterol biosynthesis, as a 3-ketosteroid reductase. This Rattus norvegicus (Rat) protein is 3-keto-steroid reductase/17-beta-hydroxysteroid dehydrogenase 7 (Hsd17b7).